The primary structure comprises 469 residues: Protein RUFY3 (469 aa).

2 positions are modified to phosphothreonine: Thr5 and Thr12. Phosphoserine is present on residues Tyr27, Ser34, and Ser49. Thr51 carries the post-translational modification Phosphothreonine. Phosphoserine is present on Asp53. Positions 95–227 (DSDYAPLQQF…IDANFCMKGE (133 aa)) constitute an RUN domain. Coiled coils occupy residues 271–362 (NRHL…VEKE) and 422–463 (KSEL…AANK). Residues 321 to 337 (SYLLESNRKGPKQDRTA) are compositionally biased toward basic and acidic residues. A disordered region spans residues 321-342 (SYLLESNRKGPKQDRTAEGQAL).

Interacts with PAK1. Interacts (via C-terminus) with Ras-related Rab-5 proteins. Interacts (via C-terminus) with Ras-related Rap-2 proteins. Interacts with PIK3CA and PIK3R1. Interacts (via N-terminus) with FSCN1; this interaction induces neuron axon development. Interacts with DBN1. Interacts (via the second coiled coil) with GTP-, but not GDP-bound ARL8A and ARL8B. Interacts with dynactin/DCTN1 and the dynein intermediate chain DYNC1I1/2. Directly interacts with DYNC1LI1. In terms of processing, phosphorylated by PAK1. Isoform 1 is partially phosphorylated. As to expression, expressed in brain (at protein level).

The protein resides in the cytoplasm. It is found in the endomembrane system. Its subcellular location is the cell projection. The protein localises to the invadopodium. It localises to the growth cone. The protein resides in the perikaryon. It is found in the filopodium. Its subcellular location is the lamellipodium. The protein localises to the lysosome. ARL8 effector that promotes the coupling of endolysosomes to dynein-dynactin for retrograde transport along microtubules. Acts by binding both GTP-bound ARL8 and dynein-dynactin. In nonneuronal cells, promotes concentration of endolysosomes in the juxtanuclear area. In hippocampal neurons, drives retrograde transport of endolysosomes from the axon to the soma. Plays a role in the generation of neuronal polarity formation and axon growth. Implicated in the formation of a single axon by developing neurons. May inhibit the formation of additional axons by inhibition of PI3K in minor neuronal processes. Plays a role in the formation of F-actin-enriched protrusive structures at the cell periphery. Plays a role in cytoskeletal organization by regulating the subcellular localization of FSCN1 and DBN1 at axonal growth cones. The polypeptide is Protein RUFY3 (Mus musculus (Mouse)).